A 69-amino-acid polypeptide reads, in one-letter code: Large ribosomal subunit protein bL31 (69 aa).

Positions 16, 18, 36, and 39 each coordinate Zn(2+).

This sequence belongs to the bacterial ribosomal protein bL31 family. Type A subfamily. Part of the 50S ribosomal subunit. The cofactor is Zn(2+).

Binds the 23S rRNA. The polypeptide is Large ribosomal subunit protein bL31 (Kosmotoga olearia (strain ATCC BAA-1733 / DSM 21960 / TBF 19.5.1)).